Reading from the N-terminus, the 148-residue chain is Leghemoglobin 2 (148 aa).

One can recognise a Globin domain in the interval 2 to 148 (GFTEKQEALV…LSAAIKKAMS (147 aa)). At Tyr30 the chain carries Nitrated tyrosine. A heme b-binding site is contributed by Ser45. Position 45 is a phosphoserine (Ser45). His63 is an O2 binding site. Residues Lys66, His95, and Lys98 each contribute to the heme b site. The residue at position 136 (Tyr136) is a Nitrated tyrosine.

The protein belongs to the plant globin family. Monomer. Nitrated in effective nodules and particularly in hypoxic conditions; this mechanism may play a protective role in the symbiosis by buffering toxic peroxynitrite NO(2)(-). Nitration level decrease during nodule senescence. In terms of processing, phosphorylation at Ser-45 disrupts the molecular environment of its porphyrin ring oxygen binding pocket, thus leading to a reduced oxygen consumption and to the delivery of oxygen O(2) to symbiosomes. In terms of tissue distribution, stem nodules.

Its subcellular location is the cytoplasm. The protein localises to the cytosol. The protein resides in the nucleus. Functionally, leghemoglobin that reversibly binds oxygen O(2) through a pentacoordinated heme iron. In stem nodules, facilitates the diffusion of oxygen to the bacteroids while preventing the bacterial nitrogenase from being inactivated by buffering dioxygen, nitric oxide and carbon monoxide, and promoting the formation of reactive oxygen species (ROS, e.g. H(2)O(2)). This role is essential for symbiotic nitrogen fixation (SNF). The polypeptide is Leghemoglobin 2 (Sesbania rostrata).